A 502-amino-acid polypeptide reads, in one-letter code: MPRGCAGARFACNACLNFLAGLGISEPISPGWAAMERLSGLDAFFLYMETPSQPLNVCCVLELDTSTMPGGYTYGRFHAALEKYVKAAPEFRMKLADTELNLDHPVWVDDDNFQIRHHLRRVAMPAPGGRRELAEICGYIAGLPLDRDRPLWEMWVIEGGARSDTVAVMLKVHHAVVDGVAGANLLSHLCSLQPDAPAPQPVRGTGGGNVLQIAASGLVGFASRPVRLATVVPATVLTLVRTLLRAREGRTMAAPFSAPPTPFNGPLGRLRNIAYTQLDMRDVKRVKDRFGVTINDVVVALCAGALRRFLLEHGVLPEAPLVATVPVSVHDKSDRPGRNQATWMFCRVPSQISDPAQRIRTIAAGNTVAKDHAAAIGPTLLHDWIQFGGSTMFGAAMRILPHISITHSPAYNLILSNVPGPQAQLYFLGCRMDSMFPLGPLLGNAGLNITVMSLNGELGVGIVSCPDLLPDLWGVADGFPEALKELLECSDDQPEGSNHQDS.

H174 (proton acceptor) is an active-site residue.

The protein belongs to the long-chain O-acyltransferase family.

The catalysed reaction is an acyl-CoA + a 1,2-diacyl-sn-glycerol = a triacyl-sn-glycerol + CoA. Its pathway is glycerolipid metabolism; triacylglycerol biosynthesis. This Mycobacterium tuberculosis (strain CDC 1551 / Oshkosh) protein is Putative diacyglycerol O-acyltransferase MT1809.